The primary structure comprises 459 residues: Jacalin-related lectin 12 (459 aa).

3 Jacalin-type lectin domains span residues 2 to 148 (SQDS…YFTP), 151 to 296 (PTRM…YITT), and 298 to 443 (TLTK…YSFP).

Belongs to the jacalin lectin family.

The protein is Jacalin-related lectin 12 (JAL12) of Arabidopsis thaliana (Mouse-ear cress).